A 512-amino-acid polypeptide reads, in one-letter code: GMP synthase [glutamine-hydrolyzing] (512 aa).

Positions N3–T196 constitute a Glutamine amidotransferase type-1 domain. Residue C80 is the Nucleophile of the active site. Active-site residues include H169 and E171. The GMPS ATP-PPase domain maps to W197–R387. S225–S231 contacts ATP.

In terms of assembly, homodimer.

It carries out the reaction XMP + L-glutamine + ATP + H2O = GMP + L-glutamate + AMP + diphosphate + 2 H(+). It participates in purine metabolism; GMP biosynthesis; GMP from XMP (L-Gln route): step 1/1. Functionally, catalyzes the synthesis of GMP from XMP. This is GMP synthase [glutamine-hydrolyzing] (guaA) from Chlamydia muridarum (strain MoPn / Nigg).